A 1201-amino-acid chain; its full sequence is Potassium channel subfamily T member 1 (1201 aa).

The interval 1-28 (MARAKLKNSPSESNSHVKTVPPATTEDV) is disordered. The Cytoplasmic portion of the chain corresponds to 1–92 (MARAKLKNSP…FFIKNQRSSL (92 aa)). Over residues 8-17 (NSPSESNSHV) the composition is skewed to polar residues. Residues 93–115 (RIRLFNFSLKLLTCLLYIVRVLL) form a helical membrane-spanning segment. The Extracellular portion of the chain corresponds to 116-152 (DNPEEGIGCWECEKQNYTLFNQSTKINWSHIFWVDRK). 2 N-linked (GlcNAc...) asparagine glycosylation sites follow: N131 and N136. The chain crosses the membrane as a helical span at residues 153–175 (LPLWAVQVSIALISFLETMLLIY). The Cytoplasmic portion of the chain corresponds to 176–184 (LSYKGNIWE). The helical transmembrane segment at 185 to 206 (QIFRISFILEMINTVPFIITIF) threads the bilayer. Over 207–216 (WPPLRNLFIP) the chain is Extracellular. A helical transmembrane segment spans residues 217–229 (VFLNCWLAKYALE). Residues 230–249 (NMINDLHRAIQRTQSAMFNQ) lie on the Cytoplasmic side of the membrane. The chain crosses the membrane as a helical span at residues 250–272 (VLILICTLLCLVFTGTCGIQHLE). Residues 273-279 (RAGEKLS) are Extracellular-facing. The segment at residues 280 to 300 (LFKSFYFCIVTFSTVGYGDVT) is an intramembrane region (pore-forming). Residues V294 and G295 each coordinate K(+). Residues 301-304 (PKIW) lie on the Extracellular side of the membrane. The helical transmembrane segment at 305 to 326 (PSQLLVVIMICVALVVLPLQFE) threads the bilayer. At 327–1201 (ELVYLWMERQ…NPETRDETQL (875 aa)) the chain is on the cytoplasmic side. An RCK N-terminal 1 domain is found at 350–486 (EKHVVLCVSS…FHVKFADHVV (137 aa)). Residues L511, H514, S536, and N538 each contribute to the Na(+) site. Residues C750 and C751 each contribute to the Zn(2+) site. K(+) contacts are provided by R753 and K756. Na(+) is bound by residues R753 and K756. Zn(2+) is bound by residues C758 and H760. 3 residues coordinate K(+): N761, Y769, and G770. F771 provides a ligand contact to Na(+). An RCK N-terminal 2 domain is found at 773 to 913 (NKLIIVSAET…QFRAKDSYSL (141 aa)). K(+) contacts are provided by S779, L810, D812, G834, and D857. The interval 1175–1201 (NDGHSRKSSCSNKLGPCNPETRDETQL) is disordered.

This sequence belongs to the potassium channel family. Calcium-activated (TC 1.A.1.3) subfamily. KCa4.1/KCNT1 sub-subfamily. As to quaternary structure, homotetramer; which constitutes the Na(+)-activated K(+) channel. Interacts with KCNT2; these heterodimer channels differ from the homomers in their unitary conductance, kinetic behavior, subcellular localization, and response to activation of protein kinase C. Phosphorylated by protein kinase C. Phosphorylation of the C-terminal domain increases channel activity.

It localises to the cell membrane. It carries out the reaction K(+)(in) = K(+)(out). Its activity is regulated as follows. Activated by high intracellular Na(+). In addition to activation by Na(+), is cooperatively activated by intracellular Cl(-) levels. Inhibited by Zn(2+). Activated upon stimulation of G-protein coupled receptors, such as CHRM1 and GRIA1. Functionally, sodium-activated K(+) channel. Acts as an important mediator of neuronal membrane excitability. Contributes to the delayed outward currents. Regulates of neuronal bursting in sensory neurons. Contributes to synaptic development and plasticity. The protein is Potassium channel subfamily T member 1 (KCNT1) of Gallus gallus (Chicken).